We begin with the raw amino-acid sequence, 448 residues long: Binary larvicide subunit BinB (448 aa).

A beta-trefoil domain region spans residues 19 to 200 (TNYPLNTTPT…FVNSSFYAAA (182 aa)). C67 and C161 are disulfide-bonded. The tract at residues 226–407 (PKDAVRAVKG…APITNPLTLT (182 aa)) is probable pore-forming domain.

Belongs to the toxin_10 family. Forms a heterodimer with BinA. In terms of processing, processed by proteases extracted from mosquito larval gut.

Its subcellular location is the spore. The protein localises to the perispore. Its function is as follows. Component of a binary toxin active against Culex and some Aedes mosquito larvae. This subunit is responsible for localized binding to specific regions of the host larval gut. The individual subunits are not toxic. BinAB and this subunit alone bind to the gastric caecum and posterior midgut of C.quinquefasciatus larvae. Binary toxin internalization into host gut cells requires both proteins. Does not bind to the midgut of Aedes aegypti. Toxic to Aedes atropalpus mosquito larvae; mortality towards both C.quinquefasciatus and A.atropalpus is maximal by 48 hours. A.aegypti is not very susceptible to this toxin. Binding component of binary toxin. The 51 kDa polypeptide acts synergetically with the 42 kDa polypeptide for expression of a larvicidal toxin. The sequence is that of Binary larvicide subunit BinB from Lysinibacillus sphaericus (Bacillus sphaericus).